The following is a 142-amino-acid chain: Large ribosomal subunit protein uL11 (142 aa).

It belongs to the universal ribosomal protein uL11 family. Part of the ribosomal stalk of the 50S ribosomal subunit. Interacts with L10 and the large rRNA to form the base of the stalk. L10 forms an elongated spine to which L12 dimers bind in a sequential fashion forming a multimeric L10(L12)X complex. One or more lysine residues are methylated.

Forms part of the ribosomal stalk which helps the ribosome interact with GTP-bound translation factors. This Mycobacterium ulcerans (strain Agy99) protein is Large ribosomal subunit protein uL11.